A 182-amino-acid chain; its full sequence is Bifunctional protein PyrR (182 aa).

The short motif at 97–109 (VVLVDDVIFRGRT) is the PRPP-binding element.

The protein belongs to the purine/pyrimidine phosphoribosyltransferase family. PyrR subfamily.

The catalysed reaction is UMP + diphosphate = 5-phospho-alpha-D-ribose 1-diphosphate + uracil. Regulates the transcription of the pyrimidine nucleotide (pyr) operon in response to exogenous pyrimidines. In terms of biological role, also displays a weak uracil phosphoribosyltransferase activity which is not physiologically significant. This is Bifunctional protein PyrR from Synechococcus sp. (strain JA-2-3B'a(2-13)) (Cyanobacteria bacterium Yellowstone B-Prime).